A 49-amino-acid chain; its full sequence is Large ribosomal subunit protein bL33A (49 aa).

The protein belongs to the bacterial ribosomal protein bL33 family.

The protein is Large ribosomal subunit protein bL33A of Bacillus licheniformis (strain ATCC 14580 / DSM 13 / JCM 2505 / CCUG 7422 / NBRC 12200 / NCIMB 9375 / NCTC 10341 / NRRL NRS-1264 / Gibson 46).